The chain runs to 425 residues: Glutamate-1-semialdehyde 2,1-aminomutase (425 aa).

Lys-264 is modified (N6-(pyridoxal phosphate)lysine).

The protein belongs to the class-III pyridoxal-phosphate-dependent aminotransferase family. HemL subfamily. In terms of assembly, homodimer. It depends on pyridoxal 5'-phosphate as a cofactor.

The protein localises to the cytoplasm. The enzyme catalyses (S)-4-amino-5-oxopentanoate = 5-aminolevulinate. Its pathway is porphyrin-containing compound metabolism; protoporphyrin-IX biosynthesis; 5-aminolevulinate from L-glutamyl-tRNA(Glu): step 2/2. The sequence is that of Glutamate-1-semialdehyde 2,1-aminomutase from Campylobacter lari (strain RM2100 / D67 / ATCC BAA-1060).